The following is a 338-amino-acid chain: Anthranilate phosphoribosyltransferase (338 aa).

5-phospho-alpha-D-ribose 1-diphosphate-binding positions include G81, 84-85 (GD), T89, 91-94 (NIST), 109-117 (KHGNRNLSS), and A121. G81 contributes to the anthranilate binding site. A Mg(2+)-binding site is contributed by S93. Position 112 (N112) interacts with anthranilate. R167 contributes to the anthranilate binding site. Mg(2+)-binding residues include D226 and E227.

It belongs to the anthranilate phosphoribosyltransferase family. As to quaternary structure, homodimer. The cofactor is Mg(2+).

The enzyme catalyses N-(5-phospho-beta-D-ribosyl)anthranilate + diphosphate = 5-phospho-alpha-D-ribose 1-diphosphate + anthranilate. It participates in amino-acid biosynthesis; L-tryptophan biosynthesis; L-tryptophan from chorismate: step 2/5. Catalyzes the transfer of the phosphoribosyl group of 5-phosphorylribose-1-pyrophosphate (PRPP) to anthranilate to yield N-(5'-phosphoribosyl)-anthranilate (PRA). In Cereibacter sphaeroides (strain ATCC 17023 / DSM 158 / JCM 6121 / CCUG 31486 / LMG 2827 / NBRC 12203 / NCIMB 8253 / ATH 2.4.1.) (Rhodobacter sphaeroides), this protein is Anthranilate phosphoribosyltransferase.